A 373-amino-acid polypeptide reads, in one-letter code: Malate dehydrogenase, mitochondrial (373 aa).

NAD(+) is bound by residues 69–75 and Asp-95; that span reads GAAGGIG. Substrate-binding residues include Arg-141 and Arg-147. NAD(+) is bound by residues Asn-154 and 177–179; that span reads ISN. The substrate site is built by Asn-179 and Arg-213. His-237 (proton acceptor) is an active-site residue. Met-288 contributes to the NAD(+) binding site.

It belongs to the LDH/MDH superfamily. MDH type 1 family. In terms of assembly, homodimer.

The protein localises to the mitochondrion matrix. It carries out the reaction (S)-malate + NAD(+) = oxaloacetate + NADH + H(+). In Chlamydomonas reinhardtii (Chlamydomonas smithii), this protein is Malate dehydrogenase, mitochondrial.